A 103-amino-acid polypeptide reads, in one-letter code: Small ribosomal subunit protein uS17 (103 aa).

Positions 78 to 103 (SHSPKADKSAGSTAPAPEAAAKEVSE) are disordered.

The protein belongs to the universal ribosomal protein uS17 family. As to quaternary structure, part of the 30S ribosomal subunit.

One of the primary rRNA binding proteins, it binds specifically to the 5'-end of 16S ribosomal RNA. The protein is Small ribosomal subunit protein uS17 of Parasynechococcus marenigrum (strain WH8102).